The following is a 28-amino-acid chain: MAGASAKVVAMLLSLQGPXSLRMVSESG.

An Expansin-like CBD domain is found at 11–28 (MLLSLQGPXSLRMVSESG).

The protein belongs to the expansin family. Expansin B subfamily.

It localises to the secreted. The protein resides in the cell wall. Its subcellular location is the membrane. Its function is as follows. May cause loosening and extension of plant cell walls by disrupting non-covalent bonding between cellulose microfibrils and matrix glucans. This is Expansin-B1 from Pseudotsuga menziesii (Douglas-fir).